We begin with the raw amino-acid sequence, 472 residues long: Adenosylhomocysteinase (472 aa).

Residues threonine 61, aspartate 139, and glutamate 198 each coordinate substrate. An NAD(+)-binding site is contributed by 199 to 201 (TTT). Lysine 228 and aspartate 232 together coordinate substrate. NAD(+) contacts are provided by residues asparagine 233, 262–267 (GFGDVG), glutamate 285, asparagine 320, 341–343 (IGH), and asparagine 386.

It belongs to the adenosylhomocysteinase family. NAD(+) serves as cofactor.

The protein resides in the cytoplasm. It catalyses the reaction S-adenosyl-L-homocysteine + H2O = L-homocysteine + adenosine. The protein operates within amino-acid biosynthesis; L-homocysteine biosynthesis; L-homocysteine from S-adenosyl-L-homocysteine: step 1/1. In terms of biological role, may play a key role in the regulation of the intracellular concentration of adenosylhomocysteine. The sequence is that of Adenosylhomocysteinase from Sphingopyxis alaskensis (strain DSM 13593 / LMG 18877 / RB2256) (Sphingomonas alaskensis).